A 333-amino-acid polypeptide reads, in one-letter code: UDP-N-acetylglucosamine--N-acetylmuramyl-(pentapeptide) pyrophosphoryl-undecaprenol N-acetylglucosamine transferase (333 aa).

UDP-N-acetyl-alpha-D-glucosamine-binding positions include 10–12 (TGG), Asn-124, Ser-177, and Gln-275.

This sequence belongs to the glycosyltransferase 28 family. MurG subfamily.

It localises to the cell inner membrane. It catalyses the reaction di-trans,octa-cis-undecaprenyl diphospho-N-acetyl-alpha-D-muramoyl-L-alanyl-D-glutamyl-meso-2,6-diaminopimeloyl-D-alanyl-D-alanine + UDP-N-acetyl-alpha-D-glucosamine = di-trans,octa-cis-undecaprenyl diphospho-[N-acetyl-alpha-D-glucosaminyl-(1-&gt;4)]-N-acetyl-alpha-D-muramoyl-L-alanyl-D-glutamyl-meso-2,6-diaminopimeloyl-D-alanyl-D-alanine + UDP + H(+). The protein operates within cell wall biogenesis; peptidoglycan biosynthesis. Cell wall formation. Catalyzes the transfer of a GlcNAc subunit on undecaprenyl-pyrophosphoryl-MurNAc-pentapeptide (lipid intermediate I) to form undecaprenyl-pyrophosphoryl-MurNAc-(pentapeptide)GlcNAc (lipid intermediate II). The polypeptide is UDP-N-acetylglucosamine--N-acetylmuramyl-(pentapeptide) pyrophosphoryl-undecaprenol N-acetylglucosamine transferase (Nitratiruptor sp. (strain SB155-2)).